Consider the following 150-residue polypeptide: Large ribosomal subunit protein bL9 (150 aa).

It belongs to the bacterial ribosomal protein bL9 family.

Functionally, binds to the 23S rRNA. The chain is Large ribosomal subunit protein bL9 from Hydrogenovibrio crunogenus (strain DSM 25203 / XCL-2) (Thiomicrospira crunogena).